The sequence spans 309 residues: Isopentenyl-diphosphate Delta-isomerase II (309 aa).

Lysine 112 contacts substrate. Residues histidine 116 and histidine 128 each coordinate Mg(2+). The region spanning leucine 126–leucine 278 is the Nudix hydrolase domain. Substrate-binding residues include arginine 147 and lysine 151. Cysteine 163 is a catalytic residue. Residue serine 164 coordinates substrate. Glutamate 223 and glutamate 225 together coordinate Mg(2+). Residue glutamate 225 is part of the active site.

This sequence belongs to the IPP isomerase type 1 family. Mg(2+) is required as a cofactor.

It carries out the reaction isopentenyl diphosphate = dimethylallyl diphosphate. It participates in isoprenoid biosynthesis; dimethylallyl diphosphate biosynthesis; dimethylallyl diphosphate from isopentenyl diphosphate: step 1/1. The protein operates within porphyrin-containing compound metabolism; chlorophyll biosynthesis. Functionally, catalyzes the 1,3-allylic rearrangement of the homoallylic substrate isopentenyl (IPP) to its highly electrophilic allylic isomer, dimethylallyl diphosphate (DMAPP). The protein is Isopentenyl-diphosphate Delta-isomerase II (IPI2) of Camptotheca acuminata (Happy tree).